The primary structure comprises 358 residues: Ornithine cyclodeaminase (358 aa).

Positions 52 and 76 each coordinate L-ornithine. Residues T91, R119, A146–Q147, D168, T208, V231–D234, K238, and S299 each bind NAD(+). R119 contributes to the L-ornithine binding site. D234 is an L-ornithine binding site. The active-site Proton donor/acceptor is D234. V300 is a binding site for L-ornithine.

The protein belongs to the ornithine cyclodeaminase/mu-crystallin family. Requires NAD(+) as cofactor.

The enzyme catalyses L-ornithine = L-proline + NH4(+). Its pathway is amino-acid biosynthesis; L-proline biosynthesis; L-proline from L-ornithine: step 1/1. Functionally, catalyzes the conversion of L-ornithine into L-proline with release of ammonia. This Brucella suis biovar 1 (strain 1330) protein is Ornithine cyclodeaminase.